Here is a 361-residue protein sequence, read N- to C-terminus: Holliday junction branch migration complex subunit RuvB (361 aa).

2 stretches are compositionally biased toward basic and acidic residues: residues 1–13 (MSDV…KLPE) and 33–43 (QGEHDIERSLR). The interval 1–43 (MSDVERTEFKLPEGMDLSSPPQRNQDVDAAEQQGEHDIERSLR) is disordered. The interval 2–203 (SDVERTEFKL…FGFTAQMEYY (202 aa)) is large ATPase domain (RuvB-L). Residues leucine 42, arginine 43, glycine 84, lysine 87, threonine 88, threonine 89, 150–152 (EDF), arginine 193, tyrosine 203, and arginine 240 contribute to the ATP site. Threonine 88 contributes to the Mg(2+) binding site. Residues 204 to 274 (DTEDLTRVIS…AAQAALRVFD (71 aa)) are small ATPAse domain (RuvB-S). Residues 277 to 361 (ERGLDRLDRA…PEGAIGGTLF (85 aa)) form a head domain (RuvB-H) region. Arginine 332 and arginine 337 together coordinate DNA.

It belongs to the RuvB family. As to quaternary structure, homohexamer. Forms an RuvA(8)-RuvB(12)-Holliday junction (HJ) complex. HJ DNA is sandwiched between 2 RuvA tetramers; dsDNA enters through RuvA and exits via RuvB. An RuvB hexamer assembles on each DNA strand where it exits the tetramer. Each RuvB hexamer is contacted by two RuvA subunits (via domain III) on 2 adjacent RuvB subunits; this complex drives branch migration. In the full resolvosome a probable DNA-RuvA(4)-RuvB(12)-RuvC(2) complex forms which resolves the HJ.

The protein localises to the cytoplasm. The enzyme catalyses ATP + H2O = ADP + phosphate + H(+). In terms of biological role, the RuvA-RuvB-RuvC complex processes Holliday junction (HJ) DNA during genetic recombination and DNA repair, while the RuvA-RuvB complex plays an important role in the rescue of blocked DNA replication forks via replication fork reversal (RFR). RuvA specifically binds to HJ cruciform DNA, conferring on it an open structure. The RuvB hexamer acts as an ATP-dependent pump, pulling dsDNA into and through the RuvAB complex. RuvB forms 2 homohexamers on either side of HJ DNA bound by 1 or 2 RuvA tetramers; 4 subunits per hexamer contact DNA at a time. Coordinated motions by a converter formed by DNA-disengaged RuvB subunits stimulates ATP hydrolysis and nucleotide exchange. Immobilization of the converter enables RuvB to convert the ATP-contained energy into a lever motion, pulling 2 nucleotides of DNA out of the RuvA tetramer per ATP hydrolyzed, thus driving DNA branch migration. The RuvB motors rotate together with the DNA substrate, which together with the progressing nucleotide cycle form the mechanistic basis for DNA recombination by continuous HJ branch migration. Branch migration allows RuvC to scan DNA until it finds its consensus sequence, where it cleaves and resolves cruciform DNA. The protein is Holliday junction branch migration complex subunit RuvB of Corynebacterium aurimucosum (strain ATCC 700975 / DSM 44827 / CIP 107346 / CN-1) (Corynebacterium nigricans).